The following is a 189-amino-acid chain: Thioredoxin-like protein CITRX, chloroplastic (189 aa).

The N-terminal 36 residues, 1 to 36 (MAMAAAASLLPACAAPTLPGRAFRPRRNSTPTASLS), are a transit peptide targeting the chloroplast. The Thioredoxin domain maps to 72 to 189 (GSGKYIAPDY…MIRNIIDNEL (118 aa)). Catalysis depends on nucleophile residues Cys112 and Cys115. Cys112 and Cys115 form a disulfide bridge.

The protein belongs to the thioredoxin family. Plant CITRX-type subfamily.

Its subcellular location is the plastid. The protein localises to the chloroplast. In terms of biological role, probable thiol-disulfide oxidoreductase that may play a role in proper chloroplast development. In Oryza sativa subsp. indica (Rice), this protein is Thioredoxin-like protein CITRX, chloroplastic.